The sequence spans 78 residues: UPF0291 protein ABC2165 (78 aa).

Residues 56–78 (AKGNDVTPQKLKDSKAQKHKRLH) are disordered.

This sequence belongs to the UPF0291 family.

The protein resides in the cytoplasm. The chain is UPF0291 protein ABC2165 from Shouchella clausii (strain KSM-K16) (Alkalihalobacillus clausii).